A 278-amino-acid polypeptide reads, in one-letter code: Troponin T, slow skeletal muscle (278 aa).

Acidic residues predominate over residues 1 to 37 (MSDTEEQEYEEEQPEEEAAEEEEEAPEEPEPVAEPEE). Disordered stretches follow at residues 1-63 (MSDT…RVDF) and 105-153 (RRRS…KKKV). At S2 the chain carries Phosphoserine; by CK2. Residues 43-55 (SRPVVPPLIPPKI) are compositionally biased toward pro residues. A compositionally biased stretch (basic and acidic residues) spans 105 to 149 (RRRSERAEQQRFRTEKERERQAKLAEEKMRKEEEEAKKRAEDDAK).

This sequence belongs to the troponin T family. In terms of assembly, interacts with TPM3.

Functionally, troponin T is the tropomyosin-binding subunit of troponin, the thin filament regulatory complex which confers calcium-sensitivity to striated muscle actomyosin ATPase activity. This is Troponin T, slow skeletal muscle (TNNT1) from Homo sapiens (Human).